Reading from the N-terminus, the 388-residue chain is Succinate--CoA ligase [ADP-forming] subunit beta (388 aa).

An ATP-grasp domain is found at lysine 9–glutamine 244. ATP-binding positions include lysine 46, glycine 53 to glycine 55, glutamate 99, cysteine 102, and glutamate 107. Residues asparagine 199 and aspartate 213 each contribute to the Mg(2+) site. Substrate is bound by residues asparagine 264 and glycine 321 to methionine 323.

It belongs to the succinate/malate CoA ligase beta subunit family. As to quaternary structure, heterotetramer of two alpha and two beta subunits. The cofactor is Mg(2+).

It catalyses the reaction succinate + ATP + CoA = succinyl-CoA + ADP + phosphate. The catalysed reaction is GTP + succinate + CoA = succinyl-CoA + GDP + phosphate. The protein operates within carbohydrate metabolism; tricarboxylic acid cycle; succinate from succinyl-CoA (ligase route): step 1/1. Succinyl-CoA synthetase functions in the citric acid cycle (TCA), coupling the hydrolysis of succinyl-CoA to the synthesis of either ATP or GTP and thus represents the only step of substrate-level phosphorylation in the TCA. The beta subunit provides nucleotide specificity of the enzyme and binds the substrate succinate, while the binding sites for coenzyme A and phosphate are found in the alpha subunit. This is Succinate--CoA ligase [ADP-forming] subunit beta from Anaeromyxobacter dehalogenans (strain 2CP-1 / ATCC BAA-258).